The following is a 464-amino-acid chain: MSLHLHDTATRTMREFHPRLAGVASIYVCGATVQGVPHIGHVRGGLNYDVLRRWLVHNGYDVRLVRNVTDIDDKILTKAADAGRPWWEWATAHERAFESAFDRLGCLPPSALPRATGHITQMIELMQRLIDKGHAYAAGGDVYFSVASYAEHYGRLSGQRLDEVQQGESTASGKRDPRDFTLWKAAKPGEPSWPTPWGDGRPGWHLECSAMSTYYLGSEFDIHGGGLDLVFPHHENELAQSTAAGDGFARYWMHNAWVTMSGEKMSKSLGNTVAIPAILQRAAAPEIRYYLVAPHYRSTIEYSEPALAEAISAYRRIDSFVNRVRQRTGEVGHGTVPAEFAAAMDDDLSTPQAIAVVHNAIRESNAALDRGDDRAANEAAASVRTMTDILGLDPLSEQWADTRGADDAAHHALSELVGSMLQQRQQARAERDFATADAVRDRLQACGIAVEDTPDGPLWTLKDG.

Cysteine 29 is a Zn(2+) binding site. The 'HIGH' region signature appears at 31 to 41; sequence ATVQGVPHIGH. A disordered region spans residues 160–180; it reads RLDEVQQGESTASGKRDPRDF. Residues cysteine 208, histidine 233, and glutamate 237 each coordinate Zn(2+). Positions 264–268 match the 'KMSKS' region motif; sequence KMSKS. Lysine 267 is a binding site for ATP.

It belongs to the class-I aminoacyl-tRNA synthetase family. Monomer. Zn(2+) is required as a cofactor.

It is found in the cytoplasm. It carries out the reaction tRNA(Cys) + L-cysteine + ATP = L-cysteinyl-tRNA(Cys) + AMP + diphosphate. The protein is Cysteine--tRNA ligase of Saccharopolyspora erythraea (strain ATCC 11635 / DSM 40517 / JCM 4748 / NBRC 13426 / NCIMB 8594 / NRRL 2338).